The chain runs to 315 residues: Cytosolic Fe-S cluster assembly factor nubp1-A (315 aa).

Residues 1–23 are disordered; that stretch reads MADIPDNAPQHCPGTDSTEAGKS. The [4Fe-4S] cluster site is built by C12, C26, C29, and C35. 66–73 is an ATP binding site; that stretch reads GKGGVGKS. [4Fe-4S] cluster contacts are provided by C239 and C242.

Belongs to the Mrp/NBP35 ATP-binding proteins family. NUBP1/NBP35 subfamily. In terms of assembly, heterotetramer of 2 nubp1 and 2 nubp2 chains. [4Fe-4S] cluster serves as cofactor.

It localises to the cytoplasm. In terms of biological role, component of the cytosolic iron-sulfur (Fe/S) protein assembly (CIA) machinery. Required for maturation of extramitochondrial Fe-S proteins. The nubp1-nubp2 heterotetramer forms a Fe-S scaffold complex, mediating the de novo assembly of an Fe-S cluster and its transfer to target apoproteins. This Xenopus laevis (African clawed frog) protein is Cytosolic Fe-S cluster assembly factor nubp1-A (nubp1-A).